The sequence spans 367 residues: Peptide chain release factor 2 (367 aa).

An N5-methylglutamine modification is found at Gln254.

This sequence belongs to the prokaryotic/mitochondrial release factor family. In terms of processing, methylated by PrmC. Methylation increases the termination efficiency of RF2.

It is found in the cytoplasm. Its function is as follows. Peptide chain release factor 2 directs the termination of translation in response to the peptide chain termination codons UGA and UAA. The protein is Peptide chain release factor 2 of Bordetella avium (strain 197N).